We begin with the raw amino-acid sequence, 92 residues long: Protein RnfH (92 aa).

Belongs to the UPF0125 (RnfH) family.

The chain is Protein RnfH from Neisseria gonorrhoeae (strain NCCP11945).